The following is an 89-amino-acid chain: UPF0298 protein GK1096 (89 aa).

Belongs to the UPF0298 family.

The protein resides in the cytoplasm. In Geobacillus kaustophilus (strain HTA426), this protein is UPF0298 protein GK1096.